The chain runs to 160 residues: Nucleotide-binding protein VS_1405 (160 aa).

It belongs to the YajQ family.

Functionally, nucleotide-binding protein. In Vibrio atlanticus (strain LGP32) (Vibrio splendidus (strain Mel32)), this protein is Nucleotide-binding protein VS_1405.